Here is a 530-residue protein sequence, read N- to C-terminus: Bifunctional purine biosynthesis protein PurH (530 aa).

Residues 1-148 form the MGS-like domain; that stretch reads MNNARPIRRA…KNHKDVTIVV (148 aa).

Belongs to the PurH family.

It catalyses the reaction (6R)-10-formyltetrahydrofolate + 5-amino-1-(5-phospho-beta-D-ribosyl)imidazole-4-carboxamide = 5-formamido-1-(5-phospho-D-ribosyl)imidazole-4-carboxamide + (6S)-5,6,7,8-tetrahydrofolate. It carries out the reaction IMP + H2O = 5-formamido-1-(5-phospho-D-ribosyl)imidazole-4-carboxamide. It participates in purine metabolism; IMP biosynthesis via de novo pathway; 5-formamido-1-(5-phospho-D-ribosyl)imidazole-4-carboxamide from 5-amino-1-(5-phospho-D-ribosyl)imidazole-4-carboxamide (10-formyl THF route): step 1/1. The protein operates within purine metabolism; IMP biosynthesis via de novo pathway; IMP from 5-formamido-1-(5-phospho-D-ribosyl)imidazole-4-carboxamide: step 1/1. The chain is Bifunctional purine biosynthesis protein PurH from Vibrio atlanticus (strain LGP32) (Vibrio splendidus (strain Mel32)).